The primary structure comprises 207 residues: Transcriptional regulator YqjI (207 aa).

The span at 1–40 (MSHHHEGCCKHEGQPRHEGCCKGEKSEHEHCGHGHQHEHG) shows a compositional bias: basic and acidic residues. The interval 1-46 (MSHHHEGCCKHEGQPRHEGCCKGEKSEHEHCGHGHQHEHGQCCGGR) is disordered.

In terms of assembly, oligomer (probable predominant form) and monomer.

With respect to regulation, divalent metals such as nickel and iron have a similar negative effect on YqjI DNA-binding activity. Its function is as follows. Represses the expression of YqjH which is involved in iron homeostasis under excess nickel conditions. Also represses its own expression. This is Transcriptional regulator YqjI (yqjI) from Escherichia coli (strain K12).